A 327-amino-acid chain; its full sequence is ATP-dependent 6-phosphofructokinase (327 aa).

An ATP-binding site is contributed by G12. ADP-binding positions include 22-26 (RGVVR) and 55-60 (RYSVSD). ATP contacts are provided by residues 73 to 74 (RF) and 103 to 106 (GDGS). D104 lines the Mg(2+) pocket. A substrate-binding site is contributed by 127–129 (TID). D129 acts as the Proton acceptor in catalysis. ADP is bound at residue R156. Residues R164 and 171–173 (MGR) contribute to the substrate site. ADP contacts are provided by residues 187-189 (GCE), K213, and 215-217 (KKH). Substrate is bound by residues E224, R245, and 251–254 (HIQR).

Belongs to the phosphofructokinase type A (PFKA) family. ATP-dependent PFK group I subfamily. Prokaryotic clade 'B1' sub-subfamily. In terms of assembly, homotetramer. The cofactor is Mg(2+).

It localises to the cytoplasm. It carries out the reaction beta-D-fructose 6-phosphate + ATP = beta-D-fructose 1,6-bisphosphate + ADP + H(+). The protein operates within carbohydrate degradation; glycolysis; D-glyceraldehyde 3-phosphate and glycerone phosphate from D-glucose: step 3/4. Its activity is regulated as follows. Allosterically activated by ADP and other diphosphonucleosides, and allosterically inhibited by phosphoenolpyruvate. Functionally, catalyzes the phosphorylation of D-fructose 6-phosphate to fructose 1,6-bisphosphate by ATP, the first committing step of glycolysis. In Yersinia pseudotuberculosis serotype O:1b (strain IP 31758), this protein is ATP-dependent 6-phosphofructokinase.